A 319-amino-acid chain; its full sequence is sn-1-specific diacylglycerol lipase ABHD11 (319 aa).

The transit peptide at 1–28 (MTLKLAVLRQIFQGSKGWHLWQHWRAFY) directs the protein to the mitochondrion. The 236-residue stretch at 69–304 (PPLVLLHGLF…GAGHWVHADK (236 aa)) folds into the AB hydrolase-1 domain. Residues serine 143, glutamate 239, and histidine 298 each act as charge relay system in the active site.

It belongs to the AB hydrolase superfamily. Post-translationally, phosphorylated.

Its subcellular location is the mitochondrion. The protein localises to the mitochondrion matrix. The enzyme catalyses 1-octadecanoyl-2-(5Z,8Z,11Z,14Z-eicosatetraenoyl)-sn-glycerol + H2O = 2-(5Z,8Z,11Z,14Z-eicosatetraenoyl)-glycerol + octadecanoate + H(+). It catalyses the reaction a 1,2-diacyl-sn-glycerol + H2O = a 2-acylglycerol + a fatty acid + H(+). It carries out the reaction a 1,3-diacyl-sn-glycerol + H2O = a 1-acyl-sn-glycerol + a fatty acid + H(+). The catalysed reaction is 1-octadecanoyl-2-(9Z-octadecenoyl)-sn-glycerol + H2O = 2-(9Z-octadecenoyl)-glycerol + octadecanoate + H(+). The enzyme catalyses 1-octadecanoyl-2-(4Z,7Z,10Z,13Z,16Z,19Z-docosahexaenoyl)-sn-glycerol + H2O = 2-(4Z,7Z,10Z,13Z,16Z,19Z-docosahexaenoyl)-glycerol + octadecanoate + H(+). It catalyses the reaction 1,2-didecanoylglycerol + H2O = decanoylglycerol + decanoate + H(+). Functionally, catalyzes the hydrolysis of diacylglycerol in vitro and may function as a key regulator in lipid metabolism, namely by regulating the intracellular levels of diacylglycerol. 1,2-diacyl-sn-glycerols are the preferred substrate over 1,3-diacyl-sn-glycerols. The enzyme hydrolyzes stearate in preference to palmitate from the sn-1 position of 1,2-diacyl-sn-glycerols. The sequence is that of sn-1-specific diacylglycerol lipase ABHD11 from Xenopus tropicalis (Western clawed frog).